We begin with the raw amino-acid sequence, 526 residues long: uncharacterized protein (526 aa).

2 WD repeats span residues 210 to 248 (SMEQYINSIAISPNKKYIALATTCGLIIYNLIDKTHHDT) and 452 to 491 (SHNSCVTSIAISSNNKMILTAGLDGLLKLWNSKTLNLIDS).

This is an uncharacterized protein from Acanthamoeba polyphaga mimivirus (APMV).